A 498-amino-acid polypeptide reads, in one-letter code: UDP-N-acetylmuramoylalanine--D-glutamate ligase (498 aa).

Residue 119 to 125 coordinates ATP; that stretch reads GTNGKST.

Belongs to the MurCDEF family.

Its subcellular location is the cytoplasm. The enzyme catalyses UDP-N-acetyl-alpha-D-muramoyl-L-alanine + D-glutamate + ATP = UDP-N-acetyl-alpha-D-muramoyl-L-alanyl-D-glutamate + ADP + phosphate + H(+). It participates in cell wall biogenesis; peptidoglycan biosynthesis. In terms of biological role, cell wall formation. Catalyzes the addition of glutamate to the nucleotide precursor UDP-N-acetylmuramoyl-L-alanine (UMA). The polypeptide is UDP-N-acetylmuramoylalanine--D-glutamate ligase (Wolbachia sp. subsp. Brugia malayi (strain TRS)).